A 325-amino-acid polypeptide reads, in one-letter code: GMP reductase (325 aa).

The active-site Thioimidate intermediate is the Cys173. 202–225 provides a ligand contact to NADP(+); it reads IIADGGIRDHGDIAKSVRFGASMV.

Belongs to the IMPDH/GMPR family. GuaC type 2 subfamily.

It carries out the reaction IMP + NH4(+) + NADP(+) = GMP + NADPH + 2 H(+). In terms of biological role, catalyzes the irreversible NADPH-dependent deamination of GMP to IMP. It functions in the conversion of nucleobase, nucleoside and nucleotide derivatives of G to A nucleotides, and in maintaining the intracellular balance of A and G nucleotides. The sequence is that of GMP reductase from Variovorax paradoxus (strain S110).